Here is a 1040-residue protein sequence, read N- to C-terminus: Activated CDC42 kinase 1 (1040 aa).

The interval 1 to 110 is SAM-like domain; it reads MQPEEGTGWL…PSPTPGGLAG (110 aa). The segment at 86–109 is disordered; sequence EAEFPSHHSQSTFRKPSPTPGGLA. T113 carries the phosphothreonine modification. The Protein kinase domain maps to 126-385; that stretch reads LRLLEKLGDG…PTFVALRDFL (260 aa). Residues 132–140 and K158 contribute to the ATP site; that span reads LGDGSFGVV. D252 (proton acceptor) is an active-site residue. Phosphotyrosine; by SRC and autocatalysis is present on Y284. The region spanning 388–448 is the SH3 domain; it reads AQPTDMRALQ…PRNVVTSVAG (61 aa). A disordered region spans residues 505-527; that stretch reads RPTQHLGRMKKPTYDPVSEDPDP. Y518 carries the phosphotyrosine modification. The required for interaction with SRC stretch occupies residues 623 to 652; that stretch reads DWDARPLPPPPAYDDVAQDEDDFEVCSINS. Residues 632 to 635 form a required for interaction with NEDD4 region; it reads PPAY. The disordered stretch occupies residues 722–824; it reads TGQLTPSPTP…MPTTQSFASD (103 aa). The EBD domain stretch occupies residues 733–876; the sequence is GDDKPQVPPR…PYLERYQRFL (144 aa). 2 stretches are compositionally biased toward pro residues: residues 738–749 and 772–783; these read QVPPRVPIPPRP and PSSPPRVPPREP. The segment covering 802–812 has biased composition (low complexity); it reads PLPHRLSSSPG. The residue at position 827 (Y827) is a Phosphotyrosine. The residue at position 839 (R839) is an Omega-N-methylarginine. A phosphotyrosine mark is found at Y859 and Y872. S881 carries the post-translational modification Phosphoserine. The segment at 881–957 is disordered; the sequence is SPEEPAALPV…CPGDGQEAAR (77 aa). Residues 888–903 show a composition bias toward pro residues; that stretch reads LPVPPLLPPPSTPAPA. Residues 922–931 show a composition bias toward polar residues; sequence NFSTNNSNPG. A UBA domain is found at 958–998; sequence PADKVQMLQAMVHGVTTEECQAALRSHSWSIQRAAQYLKVE.

Belongs to the protein kinase superfamily. Tyr protein kinase family. As to quaternary structure, homodimer. Interacts with CDC42. Interacts with CSPG4 (activated). Interacts with MERTK (activated); stimulates autophosphorylation. May interact (phosphorylated) with HSP90AB1; maintains kinase activity. Interacts with NPHP1. Interacts with SNX9 (via SH3 domain). Interacts with SRC (via SH2 and SH3 domain). Interacts with EGFR, and this interaction is dependent on EGF stimulation and kinase activity of EGFR. Interacts (via kinase domain) with AKT1. Part of a collagen stimulated complex involved in cell migration composed of CDC42, CRK, TNK2 and BCAR1/p130cas. Interacts with BCAR1/p130cas via SH3 domains. Forms complexes with GRB2 and numerous receptor tyrosine kinases (RTK) including LTK, AXL or PDGFRL, in which GRB2 promotes RTK recruitment by TNK2. Interacts with NEDD4 (via WW3 domain). NEDD4L and EGF promote association with NEDD4. Requires Mg(2+) as cofactor. In terms of processing, autophosphorylation regulates kinase activity. Phosphorylation on Tyr-518 is required for interaction with SRC and is observed during association with clathrin-coated pits. Post-translationally, polyubiquitinated by NEDD4 and NEDD4L. Degradation can be induced by EGF and is lysosome-dependent.

It is found in the cell membrane. It localises to the nucleus. The protein resides in the endosome. The protein localises to the cell junction. Its subcellular location is the adherens junction. It is found in the cytoplasmic vesicle membrane. It localises to the cytoplasmic vesicle. The protein resides in the clathrin-coated vesicle. The protein localises to the membrane. Its subcellular location is the clathrin-coated pit. It is found in the cytoplasm. It localises to the cytosol. The enzyme catalyses L-tyrosyl-[protein] + ATP = O-phospho-L-tyrosyl-[protein] + ADP + H(+). It carries out the reaction L-seryl-[protein] + ATP = O-phospho-L-seryl-[protein] + ADP + H(+). The catalysed reaction is L-threonyl-[protein] + ATP = O-phospho-L-threonyl-[protein] + ADP + H(+). Functionally, non-receptor tyrosine-protein and serine/threonine-protein kinase that is implicated in cell spreading and migration, cell survival, cell growth and proliferation. Transduces extracellular signals to cytosolic and nuclear effectors. Phosphorylates AKT1, AR, MCF2, WASL and WWOX. Implicated in trafficking and clathrin-mediated endocytosis through binding to epidermal growth factor receptor (EGFR) and clathrin. Binds to both poly- and mono-ubiquitin and regulates ligand-induced degradation of EGFR, thereby contributing to the accumulation of EGFR at the limiting membrane of early endosomes. Downstream effector of CDC42 which mediates CDC42-dependent cell migration via phosphorylation of BCAR1. May be involved both in adult synaptic function and plasticity and in brain development. Activates AKT1 by phosphorylating it on 'Tyr-176'. Phosphorylates AR on 'Tyr-267' and 'Tyr-363', thereby promoting its recruitment to androgen-responsive enhancers (AREs). Phosphorylates WWOX on 'Tyr-287'. Phosphorylates MCF2, thereby enhancing its activity as a guanine nucleotide exchange factor (GEF) toward Rho family proteins. Contributes to the control of AXL receptor levels. Confers metastatic properties on cancer cells and promotes tumor growth by negatively regulating tumor suppressor such as WWOX and positively regulating pro-survival factors such as AKT1 and AR. The polypeptide is Activated CDC42 kinase 1 (Rattus norvegicus (Rat)).